The chain runs to 747 residues: AMP deaminase 1 (747 aa).

Residue T81 is modified to Phosphothreonine. A Phosphoserine modification is found at S85. Y216 carries the phosphotyrosine modification. Residues H303 and H305 each coordinate Zn(2+). Residues H305 and 374-379 (KFNDKY) contribute to the substrate site. S441 is subject to Phosphoserine. Position 572 (H572) interacts with Zn(2+). E575 is a substrate binding site. H594 acts as the Proton acceptor in catalysis. A Zn(2+)-binding site is contributed by D649. 650–653 (DPMQ) provides a ligand contact to substrate.

It belongs to the metallo-dependent hydrolases superfamily. Adenosine and AMP deaminases family. As to quaternary structure, homotetramer. Zn(2+) is required as a cofactor.

The enzyme catalyses AMP + H2O + H(+) = IMP + NH4(+). Its pathway is purine metabolism; IMP biosynthesis via salvage pathway; IMP from AMP: step 1/1. AMP deaminase plays a critical role in energy metabolism. This chain is AMP deaminase 1, found in Homo sapiens (Human).